A 384-amino-acid chain; its full sequence is S-adenosylmethionine synthase (384 aa).

His15 provides a ligand contact to ATP. Asp17 is a Mg(2+) binding site. Glu43 provides a ligand contact to K(+). Positions 56 and 99 each coordinate L-methionine. Positions 99 to 109 are flexible loop; the sequence is QSPDINQGVDR. ATP-binding positions include 164–166, 230–231, Asp239, 245–246, Ala262, and Lys266; these read DAK, RF, and RK. Asp239 is a binding site for L-methionine. Lys270 serves as a coordination point for L-methionine.

The protein belongs to the AdoMet synthase family. As to quaternary structure, homotetramer; dimer of dimers. Mg(2+) serves as cofactor. The cofactor is K(+).

It localises to the cytoplasm. The enzyme catalyses L-methionine + ATP + H2O = S-adenosyl-L-methionine + phosphate + diphosphate. Its pathway is amino-acid biosynthesis; S-adenosyl-L-methionine biosynthesis; S-adenosyl-L-methionine from L-methionine: step 1/1. Catalyzes the formation of S-adenosylmethionine (AdoMet) from methionine and ATP. The overall synthetic reaction is composed of two sequential steps, AdoMet formation and the subsequent tripolyphosphate hydrolysis which occurs prior to release of AdoMet from the enzyme. In Salmonella arizonae (strain ATCC BAA-731 / CDC346-86 / RSK2980), this protein is S-adenosylmethionine synthase.